Reading from the N-terminus, the 109-residue chain is Thioredoxin (109 aa).

In terms of domain architecture, Thioredoxin spans 2–107; that stretch reads SISQVIDTSF…LLNTLQKHLK (106 aa). Catalysis depends on nucleophile residues C31 and C34. A disulfide bridge links C31 with C34.

It belongs to the thioredoxin family.

Its subcellular location is the plastid. The protein localises to the chloroplast. Participates in various redox reactions through the reversible oxidation of its active center dithiol to a disulfide and catalyzes dithiol-disulfide exchange reactions. In Griffithsia pacifica (Red alga), this protein is Thioredoxin (trxA).